The sequence spans 432 residues: Glutamate-1-semialdehyde 2,1-aminomutase (432 aa).

An N6-(pyridoxal phosphate)lysine modification is found at Lys270.

This sequence belongs to the class-III pyridoxal-phosphate-dependent aminotransferase family. HemL subfamily. As to quaternary structure, homodimer. Requires pyridoxal 5'-phosphate as cofactor.

It localises to the cytoplasm. It catalyses the reaction (S)-4-amino-5-oxopentanoate = 5-aminolevulinate. It functions in the pathway porphyrin-containing compound metabolism; protoporphyrin-IX biosynthesis; 5-aminolevulinate from L-glutamyl-tRNA(Glu): step 2/2. This chain is Glutamate-1-semialdehyde 2,1-aminomutase, found in Acinetobacter baylyi (strain ATCC 33305 / BD413 / ADP1).